The chain runs to 364 residues: MRIVISGGGTGGHIYPALAFIKEVKRLHPDVEFLYIGTENGLEKKIVERENIPFKAIEISGFKRKLSFDNVKTVMRFLKGVQKSKSYLKEFKPDAVIGTGGYVCGPVVYAASKLKIPTIIHEQNSLPGITNKFLARYVNKVAICFDEAKAHFPSEKVVFTGNPRASEVVSIKEGKSLKEFGLDENKKTVLIFGGSRGAAPINRAVIEMQEGLKAKNYQLLYITGEVHYEKVLNELKEKGLASNMITKPFLHQMPEYLKSIDVIVARAGATTIAEVTALGIPTIFIPSPYVTANHQEINARSLEKHDAAIVLRESELTGDRLLHAIDEIAGNEEKLNQMSRLTKELGVPDAATRLYNVLKEITTT.

Residues 10-12 (TGG), N124, S195, and Q295 contribute to the UDP-N-acetyl-alpha-D-glucosamine site.

It belongs to the glycosyltransferase 28 family. MurG subfamily.

It localises to the cell membrane. It carries out the reaction di-trans,octa-cis-undecaprenyl diphospho-N-acetyl-alpha-D-muramoyl-L-alanyl-D-glutamyl-meso-2,6-diaminopimeloyl-D-alanyl-D-alanine + UDP-N-acetyl-alpha-D-glucosamine = di-trans,octa-cis-undecaprenyl diphospho-[N-acetyl-alpha-D-glucosaminyl-(1-&gt;4)]-N-acetyl-alpha-D-muramoyl-L-alanyl-D-glutamyl-meso-2,6-diaminopimeloyl-D-alanyl-D-alanine + UDP + H(+). It functions in the pathway cell wall biogenesis; peptidoglycan biosynthesis. Its function is as follows. Cell wall formation. Catalyzes the transfer of a GlcNAc subunit on undecaprenyl-pyrophosphoryl-MurNAc-pentapeptide (lipid intermediate I) to form undecaprenyl-pyrophosphoryl-MurNAc-(pentapeptide)GlcNAc (lipid intermediate II). The polypeptide is UDP-N-acetylglucosamine--N-acetylmuramyl-(pentapeptide) pyrophosphoryl-undecaprenol N-acetylglucosamine transferase (Bacillus pumilus (strain SAFR-032)).